Consider the following 329-residue polypeptide: Vanillate O-demethylase oxygenase subunit (329 aa).

The region spanning 1–84 is the Rieske domain; the sequence is MICNERMVIY…AQERHGFIWV (84 aa). Positions 24, 26, 43, and 46 each coordinate [2Fe-2S] cluster.

It belongs to the bacterial ring-hydroxylating dioxygenase alpha subunit family. This demethylase system consists of two proteins: an oxygenase and an oxygenase reductase. [2Fe-2S] cluster serves as cofactor. Fe cation is required as a cofactor.

It catalyses the reaction vanillate + NADH + O2 + H(+) = 3,4-dihydroxybenzoate + formaldehyde + NAD(+) + H2O. It functions in the pathway xenobiotic degradation; vanillyl-alcohol degradation. The chain is Vanillate O-demethylase oxygenase subunit (vanA) from Pseudomonas sp. (strain ATCC 19151).